The primary structure comprises 543 residues: Phosphoribosylaminoimidazole carboxylase (543 aa).

The ATP-grasp domain occupies 110–297 (KEHLIKNGIA…QFEAHVRAIT (188 aa)). 137–192 (GAKYGFPYMLKSRTMAYDGRGNFVVKDKSYIPEALKVLDDRPLYAEKWAPFSKELA) is an ATP binding site.

The protein in the C-terminal section; belongs to the AIR carboxylase family. Class I subfamily.

It carries out the reaction 5-amino-1-(5-phospho-D-ribosyl)imidazole-4-carboxylate + H(+) = 5-amino-1-(5-phospho-beta-D-ribosyl)imidazole + CO2. Its pathway is purine metabolism; IMP biosynthesis via de novo pathway; 5-amino-1-(5-phospho-D-ribosyl)imidazole-4-carboxylate from 5-amino-1-(5-phospho-D-ribosyl)imidazole (carboxylase route): step 1/1. The polypeptide is Phosphoribosylaminoimidazole carboxylase (ADE1) (Ogataea methanolica (Yeast)).